A 255-amino-acid polypeptide reads, in one-letter code: Probable iron chelatin transport ATP-binding protein jhp_0821 (255 aa).

Residues 3–240 (LEVKNLSFKY…HNLSALYDTP (238 aa)) enclose the ABC transporter domain. 35 to 42 (APNGSGKT) is an ATP binding site.

This sequence belongs to the ABC transporter superfamily.

The protein resides in the cell inner membrane. Part of a binding-protein-dependent transport system for an iron chelatin. Probably responsible for energy coupling to the transport system (Potential). This Helicobacter pylori (strain J99 / ATCC 700824) (Campylobacter pylori J99) protein is Probable iron chelatin transport ATP-binding protein jhp_0821.